A 2413-amino-acid polypeptide reads, in one-letter code: MSGLPPPPPGFEEDSDLALPPPPPPPPGYEIEELDNPMVPSSVNEDTFLPPPPPPPSNFEINAEEIVDFTLPPPPPPPGLDELETKAEKKVELHGKRKLDIGKDTFVTRKSRKRAKKMTKKAKRSNLYTPKAEMPPEHLRKIINTHSDMASKMYNTDKKAFLGALKYLPHAILKLLENMPHPWEQAKEVKVLYHTSGAITFVNETPRVIEPVYTAQWSATWIAMRREKRDRTHFKRMRFPPFDDDEPPLSYEQHIENIEPLDPINLPLDSQDDEYVKDWLYDSRPLEEDSKKVNGTSYKKWSFDLPEMSNLYRLSTPLRDEVTDKNYYYLFDKKSFFNGKALNNAIPGGPKFEPLYPREEEEDYNEFNSIDRVIFRVPIRSEYKVAFPHLYNSRPRSVRIPWYNNPVSCIIQNDEEYDTPALFFDPSLNPIPHFIDNNSSLNVSNTKENGDFTLPEDFAPLLAEEEELILPNTKDAMSLYHSPFPFNRTKGKMVRAQDVALAKKWFLQHPDEEYPVKVKVSYQKLLKNYVLNELHPTLPTNHNKTKLLKSLKNTKYFQQTTIDWVEAGLQLCRQGHNMLNLLIHRKGLTYLHLDYNFNLKPTKTLTTKERKKSRLGNSFHLMRELLKMMKLIVDTHVQFRLGNVDAFQLADGIHYILNHIGQLTGIYRYKYKVMHQIRACKDLKHIIYYKFNKNLGKGPGCGFWQPAWRVWLNFLRGTIPLLERYIGNLITRQFEGRSNEIVKTTTKQRLDAYYDLELRNSVMDDILEMMPESIRQKKARTILQHLSEAWRCWKANIPWDVPGMPAPIKKIIERYIKSKADAWVSAAHYNRERIKRGAHVEKTMVKKNLGRLTRLWIKNEQERQRQIQKNGPEITPEEATTIFSVMVEWLESRSFSPIPFPPLTYKNDTKILVLALEDLKDVYASKVRLNASEREELALIEEAYDNPHDTLNRIKKYLLTQRVFKPVDITMMENYQNISPVYSVDPLEKITDAYLDQYLWYEADQRKLFPNWIKPSDSEIPPLLVYKWTQGINNLSEIWDVSRGQSAVLLETTLGEMAEKIDFTLLNRLLRLIVDPNIADYITAKNNVVINFKDMSHVNKYGLIRGLKFASFIFQYYGLVIDLLLLGQERATDLAGPANNPNEFMQFKSKEVEKAHPIRLYTRYLDRIYMLFHFEEDEGEELTDEYLAENPDPNFENSIGYNNRKCWPKDSRMRLIRQDVNLGRAVFWEIQSRVPTSLTSIKWENAFVSVYSKNNPNLLFSMCGFEVRILPRQRMEEVVSNDEGVWDLVDERTKQRTAKAYLKVSEEEIKKFDSRIRGILMASGSTTFTKVAAKWNTSLISLFTYFREAIVATEPLLDILVKGETRIQNRVKLGLNSKMPTRFPPAVFYTPKELGGLGMISASHILIPASDLSWSKQTDTGITHFRAGMTHEDEKLIPTIFRYITTWENEFLDSQRVWAEYATKRQEAIQQNRRLAFEELEGSWDRGIPRISTLFQRDRHTLAYDRGHRIRREFKQYSLERNSPFWWTNSHHDGKLWNLNAYRTDVIQALGGIETILEHTLFKGTGFNSWEGLFWEKASGFEDSMQFKKLTHAQRTGLSQIPNRRFTLWWSPTINRANVYVGFLVQLDLTGIFLHGKIPTLKISLIQIFRAHLWQKIHESIVFDICQILDGELDVLQIESVTKETVHPRKSYKMNSSAADITMESVHEWEVSKPSLLHETNDSFKGLITNKMWFDVQLRYGDYDSHDISRYVRAKFLDYTTDNVSMYPSPTGVMIGIDLAYNMYDAYGNWFNGLKPLIQNSMRTIMKANPALYVLRERIRKGLQIYQSSVQEPFLNSSNYAELFNNDIKLFVDDTNVYRVTVHKTFEGNVATKAINGCIFTLNPKTGHLFLKIIHTSVWAGQKRLSQLAKWKTAEEVSALVRSLPKEEQPKQIIVTRKAMLDPLEVHMLDFPNIAIRPTELRLPFSAAMSIDKLSDVVMKATEPQMVLFNIYDDWLDRISSYTAFSRLTLLLRALKTNEESAKMILLSDPTITIKSYHLWPSFTDEQWITIESQMRDLILTEYGRKYNVNISALTQTEIKDIILGQNIKAPSVKRQKMAELEAARSEKQNDEEAAGASTVMKTKTINAQGEEIVVVASADYESQTFSSKNEWRKSAIANTLLYLRLKNIYVSADDFVEEQNVYVLPKNLLKKFIEISDVKIQVAAFIYGMSAKDHPKVKEIKTVVLVPQLGHVGSVQISNIPDIGDLPDTEGLELLGWIHTQTEELKFMAASEVATHSKLFADKKRDCIDISIFSTPGSVSLSAYNLTDEGYQWGEENKDIMNVLSEGFEPTFSTHAQLLLSDRITGNFIIPSGNVWNYTFMGTAFNQEGDYNFKYGIPLEFYNEMHRPVHFLQFSELAGDEELEAEQIDVFS.

Pro residues-rich tracts occupy residues 1–10 (MSGLPPPPPG) and 19–28 (LPPPPPPPPG). The tract at residues 1-60 (MSGLPPPPPGFEEDSDLALPPPPPPPPGYEIEELDNPMVPSSVNEDTFLPPPPPPPSNFE) is disordered. Residues 253–543 (QHIENIEPLD…LHPTLPTNHN (291 aa)) form an SNU114/CWC21 interacting domain (SCwid) region. The tract at residues 885-1375 (VMVEWLESRS…RIQNRVKLGL (491 aa)) is reverse transcriptase homology domain. The segment at 1376–1649 (NSKMPTRFPP…TLKISLIQIF (274 aa)) is linker. The tract at residues 1585–1598 (MQFKKLTHAQRTGL) is important for branch point selection. A restriction endonuclease homology domain region spans residues 1653 to 1824 (LWQKIHESIV…LRERIRKGLQ (172 aa)). An RNase H homology domain region spans residues 1839–2092 (NYAELFNNDI…ILGQNIKAPS (254 aa)). The 130-residue stretch at 2182 to 2311 (VYVLPKNLLK…LSAYNLTDEG (130 aa)) folds into the MPN domain.

As to quaternary structure, component of the U4/U6-U5 tri-snRNP complex composed of the U4, U6 and U5 snRNAs and at least PRP3, PRP4, PRP6, PRP8, PRP18, PRP31, PRP38, SNU13, SNU23, SNU66, SNU114, SPP381, SMB1, SMD1, SMD2, SMD3, SMX2, SMX3, LSM2, LSM3, LSM4, LSM5, LSM6, LSM7, LSM8, BRR2 and DIB1. Belongs to the CWC complex (or CEF1-associated complex), a spliceosome sub-complex reminiscent of a late-stage spliceosome composed of the U2, U5 and U6 snRNAs and at least BUD13, BUD31, BRR2, CDC40, CEF1, CLF1, CUS1, CWC2, CWC15, CWC21, CWC22, CWC23, CWC24, CWC25, CWC27, ECM2, HSH155, IST3, ISY1, LEA1, MSL1, NTC20, PRP8, PRP9, PRP11, PRP19, PRP21, PRP22, PRP45, PRP46, SLU7, SMB1, SMD1, SMD2, SMD3, SMX2, SMX3, SNT309, SNU114, SPP2, SYF1, SYF2, RSE1 and YJU2. Interacts with PRP40 and SNP1. Interacts (via SCwid domain) with CWC21. Interacts (via SCwid domain) with SNU114 (via N-terminus). Interacts (via RNase H homology domain and MPN domain) with BRR2; this modulates BRR2 ATPase and helicase activity. Interacts (via RNase H homology domain) with AAR2. AAR2 and BRR2 compete for PRP8 binding, and during U5 snRNP maturation BRR2 displaces the initially bound AAR2. Is associated with snRNP U5, together with SNU114 and BRR2.

Its subcellular location is the nucleus. Its function is as follows. Functions as a scaffold that mediates the ordered assembly of spliceosomal proteins and snRNAs. Required for association of BRR2 with the spliceosomal U5 snRNP, and the subsequent assembly of the U4/U6-U5 tri-snRNP complex. Functions as a scaffold that positions spliceosomal U2, U5 and U6 snRNAs at splice sites on pre-mRNA substrates, so that splicing can occur. Interacts with both the 5' and the 3' splice site, as well as the branch region. Has a role in branch site-3' splice site selection. Associates with the branch site-3' splice 3'-exon region. Also has a role in cell cycle. The polypeptide is Pre-mRNA-splicing factor 8 (PRP8) (Saccharomyces cerevisiae (strain ATCC 204508 / S288c) (Baker's yeast)).